We begin with the raw amino-acid sequence, 63 residues long: Large ribosomal subunit protein bL28 (63 aa).

It belongs to the bacterial ribosomal protein bL28 family.

The chain is Large ribosomal subunit protein bL28 from Geobacter sulfurreducens (strain ATCC 51573 / DSM 12127 / PCA).